A 479-amino-acid polypeptide reads, in one-letter code: 5-hydroxytryptamine receptor 7 (479 aa).

At 1-83 (MMDVNSSGRP…INYGRVEKVV (83 aa)) the chain is on the extracellular side. Residues N5 and N66 are each glycosylated (N-linked (GlcNAc...) asparagine). Residues 84-108 (IGSILTLITLLTIAGNCLVVISVCF) traverse the membrane as a helical segment. Residues 109–118 (VKKLRQPSNY) are Cytoplasmic-facing. The helical transmembrane segment at 119–140 (LIVSLALADLSVAVAVMPFVSV) threads the bilayer. Residues 141–152 (TDLIGGKWIFGH) are Extracellular-facing. A helical transmembrane segment spans residues 153–178 (FFCNVFIAMDVMCCTASIMTLCVISI). Cysteines 155 and 231 form a disulfide. Residue D162 participates in serotonin binding. Residues 179–198 (DRYLGITRPLTYPVRQNGKC) lie on the Cytoplasmic side of the membrane. A helical transmembrane segment spans residues 199 to 219 (MAKMILSVWLLSASITLPPLF). At 220–237 (GWAQNVNDDKVCLISQDF) the chain is on the extracellular side. The chain crosses the membrane as a helical span at residues 238-260 (GYTIYSTAVAFYIPMSVMLFMYY). Topologically, residues 261–326 (QIYKAARKSA…SIFKREQKAA (66 aa)) are cytoplasmic. The helical transmembrane segment at 327 to 352 (TTLGIIVGAFTVCWLPFFLLSTARPF) threads the bilayer. Over 353-363 (ICGTSCSCIPL) the chain is Extracellular. Residues 364–387 (WVERTFLWLGYANSLINPFIYAFF) form a helical membrane-spanning segment. The Cytoplasmic portion of the chain corresponds to 388 to 479 (NRDLRTTYRS…TVEKKVMIHD (92 aa)). C401 carries the S-palmitoyl cysteine lipid modification.

This sequence belongs to the G-protein coupled receptor 1 family. Predominant isoform in spleen, caudate and hippocampus. As to expression, expressed at lower levels. In terms of tissue distribution, minor isoform in terms of expression.

It localises to the cell membrane. In terms of biological role, G-protein coupled receptor for 5-hydroxytryptamine (serotonin), a biogenic hormone that functions as a neurotransmitter, a hormone and a mitogen. Ligand binding causes a conformation change that triggers signaling via guanine nucleotide-binding proteins (G proteins) and modulates the activity of downstream effectors. HTR7 is coupled to G(s) G alpha proteins and mediates activation of adenylate cyclase activity. This is 5-hydroxytryptamine receptor 7 from Homo sapiens (Human).